Here is a 174-residue protein sequence, read N- to C-terminus: 2-hydroxy-palmitic acid dioxygenase MPO1 (174 aa).

The Cytoplasmic segment spans residues 1-23 (MGEGLLDLRSQLGFYKFYHHNPK). The helical transmembrane segment at 24–44 (NVLIHSIFVPTILFSGSCMLH) threads the bilayer. Residues 45-63 (RVKIYQSISLTAVLSVLFS) are Lumenal-facing. A helical membrane pass occupies residues 64-84 (IFYCLLYLPTGLLAGVLLLLL). The Cytoplasmic segment spans residues 85–98 (NLALIDHRVDLTFK). Residues 99 to 119 (QELGLFTIGWIFQFVGHGVFE) traverse the membrane as a helical segment. Residues 120–131 (KRRPALIDNLVQ) lie on the Lumenal side of the membrane. A helical transmembrane segment spans residues 132-152 (SLVLAPYFIMFEFLFKLGFMP). The Cytoplasmic portion of the chain corresponds to 153–174 (RLKATLEHDLEIKQRNLRMQRQ).

Belongs to the MPO1 family. The cofactor is Fe(2+).

It localises to the endoplasmic reticulum membrane. It carries out the reaction (R)-2-hydroxyhexadecanoate + O2 = pentadecanoate + CO2 + H2O. In terms of biological role, dioxygenase that catalyzes the alpha-oxidation of 2-hydroxy fatty acids in an iron-dependent manner. Involved in metabolism of phytosphingosine and is required for proper endoplasmic reticulum stress response. In Saccharomyces cerevisiae (strain ATCC 204508 / S288c) (Baker's yeast), this protein is 2-hydroxy-palmitic acid dioxygenase MPO1.